Consider the following 634-residue polypeptide: tRNA uridine 5-carboxymethylaminomethyl modification enzyme MnmG (634 aa).

Residue G14 to G19 participates in FAD binding. G279–F293 provides a ligand contact to NAD(+).

It belongs to the MnmG family. In terms of assembly, homodimer. Heterotetramer of two MnmE and two MnmG subunits. The cofactor is FAD.

The protein localises to the cytoplasm. Its function is as follows. NAD-binding protein involved in the addition of a carboxymethylaminomethyl (cmnm) group at the wobble position (U34) of certain tRNAs, forming tRNA-cmnm(5)s(2)U34. The sequence is that of tRNA uridine 5-carboxymethylaminomethyl modification enzyme MnmG from Xanthomonas campestris pv. campestris (strain 8004).